Reading from the N-terminus, the 274-residue chain is Glutamate racemase (274 aa).

Substrate is bound by residues D9–S10 and Y41–G42. The Proton donor/acceptor role is filled by C73. Substrate is bound at residue N74–T75. C183 (proton donor/acceptor) is an active-site residue. T184–H185 lines the substrate pocket.

Belongs to the aspartate/glutamate racemases family.

The enzyme catalyses L-glutamate = D-glutamate. It functions in the pathway cell wall biogenesis; peptidoglycan biosynthesis. Provides the (R)-glutamate required for cell wall biosynthesis. This chain is Glutamate racemase, found in Shewanella baltica (strain OS155 / ATCC BAA-1091).